The following is a 341-amino-acid chain: Ribosomal RNA small subunit methyltransferase H (341 aa).

S-adenosyl-L-methionine contacts are provided by residues 47 to 49, aspartate 64, phenylalanine 91, aspartate 109, and glutamine 116; that span reads GGY.

This sequence belongs to the methyltransferase superfamily. RsmH family.

The protein localises to the cytoplasm. It catalyses the reaction cytidine(1402) in 16S rRNA + S-adenosyl-L-methionine = N(4)-methylcytidine(1402) in 16S rRNA + S-adenosyl-L-homocysteine + H(+). In terms of biological role, specifically methylates the N4 position of cytidine in position 1402 (C1402) of 16S rRNA. The chain is Ribosomal RNA small subunit methyltransferase H from Agrobacterium fabrum (strain C58 / ATCC 33970) (Agrobacterium tumefaciens (strain C58)).